The following is a 209-amino-acid chain: MEEAKHNEAEEAQGIEAREAKQIEAGETSRSSRKLITFEPKLVINKGISVLGFVLRLFAVFGTIGSALAMGTTHESVVSLSQLVLLKVKYSDLPTLMFFVVANAISGGYLVLSLPVSIFHIFSTQAKTSRIILLVVDTVMLALVSSGASAATATVYLAHEGNTTANWPPICQQFDGFCERISGSLIGSFCAVILLMLIVINSAISLSRH.

The disordered stretch occupies residues 1 to 26 (MEEAKHNEAEEAQGIEAREAKQIEAG). Residues 1 to 49 (MEEAKHNEAEEAQGIEAREAKQIEAGETSRSSRKLITFEPKLVINKGIS) lie on the Cytoplasmic side of the membrane. A helical membrane pass occupies residues 50–70 (VLGFVLRLFAVFGTIGSALAM). Residues 71–95 (GTTHESVVSLSQLVLLKVKYSDLPT) are Extracellular-facing. Residues 96–116 (LMFFVVANAISGGYLVLSLPV) traverse the membrane as a helical segment. The Cytoplasmic segment spans residues 117–130 (SIFHIFSTQAKTSR). A helical transmembrane segment spans residues 131-151 (IILLVVDTVMLALVSSGASAA). Residues 152-183 (TATVYLAHEGNTTANWPPICQQFDGFCERISG) are Extracellular-facing. Asn162 is a glycosylation site (N-linked (GlcNAc...) asparagine). A helical membrane pass occupies residues 184–204 (SLIGSFCAVILLMLIVINSAI). Residues 205-209 (SLSRH) lie on the Cytoplasmic side of the membrane.

It belongs to the Casparian strip membrane proteins (CASP) family. In terms of assembly, homodimer and heterodimers. In terms of tissue distribution, expressed in the root endodermis.

It is found in the cell membrane. The polypeptide is CASP-like protein 1A1 (Arabidopsis thaliana (Mouse-ear cress)).